Reading from the N-terminus, the 173-residue chain is Transcription factor E (173 aa).

Positions 6–89 (PLEELLEFVR…YWYVDRETLN (84 aa)) constitute an HTH TFE/IIEalpha-type domain.

It belongs to the TFE family. In terms of assembly, monomer. Interaction with RNA polymerase subunits RpoF and RpoE is necessary for Tfe stimulatory transcription activity. Able to interact with Tbp and RNA polymerase in the absence of DNA promoter. Interacts both with the preinitiation and elongation complexes.

Functionally, transcription factor that plays a role in the activation of archaeal genes transcribed by RNA polymerase. Facilitates transcription initiation by enhancing TATA-box recognition by TATA-box-binding protein (Tbp), and transcription factor B (Tfb) and RNA polymerase recruitment. Not absolutely required for transcription in vitro, but particularly important in cases where Tbp or Tfb function is not optimal. It dynamically alters the nucleic acid-binding properties of RNA polymerases by stabilizing the initiation complex and destabilizing elongation complexes. Seems to translocate with the RNA polymerase following initiation and acts by binding to the non template strand of the transcription bubble in elongation complexes. The sequence is that of Transcription factor E from Ignicoccus hospitalis (strain KIN4/I / DSM 18386 / JCM 14125).